The primary structure comprises 264 residues: Thymidylate synthase (264 aa).

R21 provides a ligand contact to dUMP. H51 lines the (6R)-5,10-methylene-5,6,7,8-tetrahydrofolate pocket. 126-127 lines the dUMP pocket; sequence RR. The active-site Nucleophile is the C146. Residues 166–169, N177, and 207–209 contribute to the dUMP site; these read RSAD and HLY. Residue D169 participates in (6R)-5,10-methylene-5,6,7,8-tetrahydrofolate binding. (6R)-5,10-methylene-5,6,7,8-tetrahydrofolate is bound at residue A263.

It belongs to the thymidylate synthase family. Bacterial-type ThyA subfamily. In terms of assembly, homodimer.

The protein localises to the cytoplasm. The catalysed reaction is dUMP + (6R)-5,10-methylene-5,6,7,8-tetrahydrofolate = 7,8-dihydrofolate + dTMP. It participates in pyrimidine metabolism; dTTP biosynthesis. Catalyzes the reductive methylation of 2'-deoxyuridine-5'-monophosphate (dUMP) to 2'-deoxythymidine-5'-monophosphate (dTMP) while utilizing 5,10-methylenetetrahydrofolate (mTHF) as the methyl donor and reductant in the reaction, yielding dihydrofolate (DHF) as a by-product. This enzymatic reaction provides an intracellular de novo source of dTMP, an essential precursor for DNA biosynthesis. The protein is Thymidylate synthase of Bartonella bacilliformis (strain ATCC 35685 / KC583 / Herrer 020/F12,63).